The following is a 174-amino-acid chain: Peptide methionine sulfoxide reductase MsrA (174 aa).

C10 is an active-site residue.

Belongs to the MsrA Met sulfoxide reductase family.

It carries out the reaction L-methionyl-[protein] + [thioredoxin]-disulfide + H2O = L-methionyl-(S)-S-oxide-[protein] + [thioredoxin]-dithiol. The catalysed reaction is [thioredoxin]-disulfide + L-methionine + H2O = L-methionine (S)-S-oxide + [thioredoxin]-dithiol. Its function is as follows. Has an important function as a repair enzyme for proteins that have been inactivated by oxidation. Catalyzes the reversible oxidation-reduction of methionine sulfoxide in proteins to methionine. This is Peptide methionine sulfoxide reductase MsrA from Pseudarthrobacter chlorophenolicus (strain ATCC 700700 / DSM 12829 / CIP 107037 / JCM 12360 / KCTC 9906 / NCIMB 13794 / A6) (Arthrobacter chlorophenolicus).